Consider the following 264-residue polypeptide: 3'-5' ssDNA/RNA exonuclease TatD (264 aa).

A divalent metal cation contacts are provided by glutamate 92, histidine 128, and histidine 153.

It belongs to the metallo-dependent hydrolases superfamily. TatD-type hydrolase family. TatD subfamily. As to quaternary structure, monomer. Mg(2+) serves as cofactor.

The protein resides in the cytoplasm. 3'-5' exonuclease that prefers single-stranded DNA and RNA. May play a role in the H(2)O(2)-induced DNA damage repair. In Musicola paradisiaca (strain Ech703) (Dickeya paradisiaca), this protein is 3'-5' ssDNA/RNA exonuclease TatD.